A 250-amino-acid chain; its full sequence is Acidic leucine-rich nuclear phosphoprotein 32 family member E (250 aa).

Position 8 is a phosphoserine (Ser8). LRR repeat units follow at residues 43 to 64, 65 to 87, and 89 to 110; these read ELEFLSMVNVGLTSLAKLPSLP, KLRKLELSDNNISGTLETLAEKC, and NLTYLNLSGNKIKELSTLEALQ. Residues 123–161 form the LRRCT domain; the sequence is CEITTLEDYRESIFELLPQVTYLDGFDAEDNEAPDSEAD. Composition is skewed to acidic residues over residues 149 to 171, 178 to 191, and 205 to 227; these read DAEDNEAPDSEADDDDDDEDGDE, EYEEEEEEDEEGSE, and IQDEEDDDDYVEEEEEEGGEEEA. Residues 149-250 form a disordered region; it reads DAEDNEAPDS…EGEDDDEDDD (102 aa). Positions 194 to 247 are ZID domain; the sequence is EVGLSYLMKEDIQDEEDDDDYVEEEEEEGGEEEADVRGEKRKREAEDEGEDDDE. Residues 228 to 238 are compositionally biased toward basic and acidic residues; it reads DVRGEKRKREA. Acidic residues predominate over residues 239–250; sequence EDEGEDDDEDDD.

It belongs to the ANP32 family. Component of a SWR1-like complex. Interacts with H2A.Z/H2AZ1. Phosphorylated. The phosphorylation is nuclear localization signal (NLS)-dependent.

It is found in the cytoplasm. The protein localises to the nucleus. Functionally, histone chaperone that specifically mediates the genome-wide removal of histone H2A.Z/H2AZ1 from the nucleosome: removes H2A.Z/H2AZ1 from its normal sites of deposition, especially from enhancer and insulator regions. Not involved in deposition of H2A.Z/H2AZ1 in the nucleosome. May stabilize the evicted H2A.Z/H2AZ1-H2B dimer, thus shifting the equilibrium towards dissociation and the off-chromatin state. Inhibits activity of protein phosphatase 2A (PP2A). Does not inhibit protein phosphatase 1. May play a role in cerebellar development and synaptogenesis. The protein is Acidic leucine-rich nuclear phosphoprotein 32 family member E (anp32e) of Danio rerio (Zebrafish).